Consider the following 184-residue polypeptide: Ras-related protein Rap-1b (184 aa).

10–18 (GSGGVGKSA) lines the GTP pocket. The segment at 25-67 (QGIFVEKYDPTIEDSYRKQVEVDAQQCMLEILDTAGTEQFTAM) is interaction with KRIT1. Positions 32-40 (YDPTIEDSY) match the Effector region motif. S39 carries the post-translational modification ADP-ribosylserine; by botulinum toxin. GTP-binding positions include 57-61 (DTAGT), 116-119 (NKCD), and 147-149 (SAK). S179 carries the phosphoserine; by PKA modification. At C181 the chain carries Cysteine methyl ester. A lipid anchor (S-geranylgeranyl cysteine) is attached at C181. Residues 182 to 184 (QLL) constitute a propeptide, removed in mature form.

The protein belongs to the small GTPase superfamily. Ras family. In terms of assembly, heterodimer with RAP1GAP. Interacts with EPAC2. Interacts with SGSM1. Interacts with SGSM2. Interacts with SGSM3. Interacts with KRIT1. Interacts with RAP1GDS1.

Its subcellular location is the cell membrane. The protein resides in the cytoplasm. It localises to the cytosol. The protein localises to the cell junction. It catalyses the reaction GTP + H2O = GDP + phosphate + H(+). Activated by guanine nucleotide-exchange factor (GEF) EPAC2 in a cAMP-dependent manner. GTP-binding protein that possesses intrinsic GTPase activity. Contributes to the polarizing activity of KRIT1 and CDH5 in the establishment and maintenance of correct endothelial cell polarity and vascular lumen. Required for the localization of phosphorylated PRKCZ, PARD3 and TIAM1 to the cell junction. Plays a role in the establishment of basal endothelial barrier function. The protein is Ras-related protein Rap-1b (Rap1b) of Rattus norvegicus (Rat).